Here is a 369-residue protein sequence, read N- to C-terminus: Cobalt-precorrin-5B C(1)-methyltransferase (369 aa).

It belongs to the CbiD family.

The enzyme catalyses Co-precorrin-5B + S-adenosyl-L-methionine = Co-precorrin-6A + S-adenosyl-L-homocysteine. The protein operates within cofactor biosynthesis; adenosylcobalamin biosynthesis; cob(II)yrinate a,c-diamide from sirohydrochlorin (anaerobic route): step 6/10. Catalyzes the methylation of C-1 in cobalt-precorrin-5B to form cobalt-precorrin-6A. The protein is Cobalt-precorrin-5B C(1)-methyltransferase of Methanococcus vannielii (strain ATCC 35089 / DSM 1224 / JCM 13029 / OCM 148 / SB).